The chain runs to 137 residues: Immunoglobulin domain-containing protein oig-1 (137 aa).

The signal sequence occupies residues 1–23; that stretch reads MFSELRILRDILLLCFLSVGINA. Residues 41–133 form the Ig-like C2-type domain; it reads PKISRSSYFK…KGSRVKKFLT (93 aa). A disulfide bridge connects residues C63 and C118.

As to expression, expressed in DD and VD GABAergic motor neurons. Expressed in a subset of head neurons including M2 motor neurons in the pharynx. Expressed in coelomocytes.

Its subcellular location is the membrane. The protein resides in the secreted. It is found in the extracellular space. The protein localises to the cell projection. It localises to the dendrite. Its subcellular location is the axon. In terms of biological role, plays a role in neural development, where it temporally regulates synapse formation in the D-type inhibitory GABAergic motor neurons, dorsal D (DD) and ventral D (VD) motor neurons. Controls the translocation of postsynaptic proteins, such as the acetylcholine receptor subunit acr-12, and presynaptic proteins, such as snb-1, along nerve cords to prevent premature synapse remodeling/formation. This chain is Immunoglobulin domain-containing protein oig-1, found in Caenorhabditis elegans.